Reading from the N-terminus, the 262-residue chain is Leucine-rich repeat-containing protein 18 (262 aa).

7 LRR repeats span residues 28-49 (GRKR…ILRL), 51-72 (DIDE…IAKF), 74-95 (NLRW…IGQM), 97-118 (SLLF…VELN), 122-144 (NIRT…GALK), 145-167 (ELHE…AKLP), and 168-189 (KLKK…EMFV).

As to expression, exclusively expressed in spermatocytes and roud spermatids within seminiferous tubules during spermatogenesis.

Its subcellular location is the cytoplasm. May be involved in the regulation of spermatogenesis and sperm maturation. The protein is Leucine-rich repeat-containing protein 18 (Lrrc18) of Mus musculus (Mouse).